Reading from the N-terminus, the 621-residue chain is TOX high mobility group box family member 4 (621 aa).

Disordered regions lie at residues 153–227 (LGLS…QKPV) and 305–333 (LDPAPPSQTPSPPPMATVDPASPAPASIE). Threonine 176 carries the post-translational modification Phosphothreonine. A phosphoserine mark is found at serine 178, serine 181, and serine 182. Residues 183–193 (LHEDGVEDFRR) show a composition bias toward basic and acidic residues. A compositionally biased stretch (basic residues) spans 208 to 218 (KQKAPKKRKKK). Positions 213–218 (KKRKKK) match the Nuclear localization signal motif. The HMG box DNA-binding region spans 223–291 (PQKPVSAYAL…EYLKALAAYK (69 aa)). The segment covering 307 to 319 (PAPPSQTPSPPPM) has biased composition (pro residues). Threonine 313 bears the Phosphothreonine mark. Phosphoserine is present on serine 315. Positions 320 to 333 (ATVDPASPAPASIE) are enriched in low complexity. At arginine 481 the chain carries Asymmetric dimethylarginine. Residues 510–525 (PTVESSPERPMNNSPE) are compositionally biased toward polar residues. Positions 510-529 (PTVESSPERPMNNSPEAHTV) are disordered. Phosphoserine is present on residues serine 533, serine 550, serine 552, serine 560, serine 562, and serine 567.

In terms of assembly, component of the PNUTS-PP1 phosphatase complex, composed of PPP1R10/PNUTS, TOX4, WDR82 and PPP1CA or PPP1CB or PPP1CC. Interacts with PPP1R10/PNUTS. Interacts with FOXO1 and CREB1 (increased by cAMP); FOXO1 and CREB1 are required for full induction of TOX4-dependent activity and the interactions are inhibited by insulin. As to expression, expressed in liver (at protein level).

Its subcellular location is the nucleus. The protein localises to the chromosome. With respect to regulation, in liver, recruited to target gene promoters following treatment with dexamethasone and cAMP. Binding is decreased in presence of insulin. Functionally, transcription factor that modulates cell fate reprogramming from the somatic state to the pluripotent and neuronal fate. In liver, controls the expression of hormone-regulated gluconeogenic genes such as G6PC1 and PCK1. This regulation is independent of the insulin receptor activation. Also acts as a regulatory component of protein phosphatase 1 (PP1) complexes. Component of the PNUTS-PP1 protein phosphatase complex, a PP1 complex that regulates RNA polymerase II transcription pause-release. PNUTS-PP1 also plays a role in the control of chromatin structure and cell cycle progression during the transition from mitosis into interphase. The polypeptide is TOX high mobility group box family member 4 (Homo sapiens (Human)).